Consider the following 256-residue polypeptide: Probable ATP-dependent transporter slr0075 (256 aa).

One can recognise an ABC transporter domain in the interval 6-250 (LSIKNLTASV…EEKGYDFLDE (245 aa)). 38-45 (GRNGSGKS) contributes to the ATP binding site.

This sequence belongs to the ABC transporter superfamily. Ycf16 family.

This Synechocystis sp. (strain ATCC 27184 / PCC 6803 / Kazusa) protein is Probable ATP-dependent transporter slr0075.